The sequence spans 497 residues: Serine hydroxymethyltransferase (497 aa).

Residues Leu176 and 180–182 (GHL) contribute to the (6S)-5,6,7,8-tetrahydrofolate site. Lys289 carries the post-translational modification N6-(pyridoxal phosphate)lysine.

This sequence belongs to the SHMT family. As to quaternary structure, homodimer. Pyridoxal 5'-phosphate serves as cofactor.

The protein resides in the cytoplasm. It carries out the reaction (6R)-5,10-methylene-5,6,7,8-tetrahydrofolate + glycine + H2O = (6S)-5,6,7,8-tetrahydrofolate + L-serine. Its pathway is one-carbon metabolism; tetrahydrofolate interconversion. The protein operates within amino-acid biosynthesis; glycine biosynthesis; glycine from L-serine: step 1/1. Catalyzes the reversible interconversion of serine and glycine with tetrahydrofolate (THF) serving as the one-carbon carrier. This reaction serves as the major source of one-carbon groups required for the biosynthesis of purines, thymidylate, methionine, and other important biomolecules. Also exhibits THF-independent aldolase activity toward beta-hydroxyamino acids, producing glycine and aldehydes, via a retro-aldol mechanism. In Chlamydia trachomatis serovar L2b (strain UCH-1/proctitis), this protein is Serine hydroxymethyltransferase.